A 112-amino-acid chain; its full sequence is Cell cycle protein GpsB (112 aa).

Positions 42-77 form a coiled coil; it reads YQKMADMNNEVVKLSEENHKLKKELEELRLRVATSR. The disordered stretch occupies residues 74 to 96; that stretch reads ATSRPQDNKNFSSNNSSSASNNV. The segment covering 81 to 95 has biased composition (low complexity); the sequence is NKNFSSNNSSSASNN.

The protein belongs to the GpsB family. As to quaternary structure, forms polymers through the coiled coil domains. Interacts with PBP1, MreC and EzrA.

It localises to the cytoplasm. Its function is as follows. Divisome component that associates with the complex late in its assembly, after the Z-ring is formed, and is dependent on DivIC and PBP2B for its recruitment to the divisome. Together with EzrA, is a key component of the system that regulates PBP1 localization during cell cycle progression. Its main role could be the removal of PBP1 from the cell pole after pole maturation is completed. Also contributes to the recruitment of PBP1 to the division complex. Not essential for septum formation. The protein is Cell cycle protein GpsB of Staphylococcus epidermidis (strain ATCC 12228 / FDA PCI 1200).